A 494-amino-acid chain; its full sequence is NAD(P)H-quinone oxidoreductase subunit 2 B, chloroplastic (494 aa).

Helical transmembrane passes span 6 to 26 (LLLF…GLIL), 39 to 59 (TPWF…VLLF), 81 to 101 (IFRF…VEYI), 106 to 126 (MAIT…MVLC), 131 to 151 (LVTI…LSGY), 166 to 186 (LLMG…LYGL), 211 to 231 (ILIA…LVPF), 277 to 297 (WHLL…LIAI), 305 to 325 (MLAY…IAGD), 336 to 356 (YMLF…LFGL), 377 to 397 (AFSL…AGFF), 413 to 433 (LLVS…LKII), and 468 to 488 (MIVC…IIAI).

The protein belongs to the complex I subunit 2 family. NDH is composed of at least 16 different subunits, 5 of which are encoded in the nucleus.

The protein localises to the plastid. It is found in the chloroplast thylakoid membrane. It catalyses the reaction a plastoquinone + NADH + (n+1) H(+)(in) = a plastoquinol + NAD(+) + n H(+)(out). The enzyme catalyses a plastoquinone + NADPH + (n+1) H(+)(in) = a plastoquinol + NADP(+) + n H(+)(out). Its function is as follows. NDH shuttles electrons from NAD(P)H:plastoquinone, via FMN and iron-sulfur (Fe-S) centers, to quinones in the photosynthetic chain and possibly in a chloroplast respiratory chain. The immediate electron acceptor for the enzyme in this species is believed to be plastoquinone. Couples the redox reaction to proton translocation, and thus conserves the redox energy in a proton gradient. In Cycas taitungensis (Prince sago), this protein is NAD(P)H-quinone oxidoreductase subunit 2 B, chloroplastic.